Consider the following 524-residue polypeptide: GMP synthase [glutamine-hydrolyzing] (524 aa).

The Glutamine amidotransferase type-1 domain maps to 7–196 (PVLVVDFGAQ…LHELAGIPAS (190 aa)). Residue Cys84 is the Nucleophile of the active site. Catalysis depends on residues His170 and Glu172. The 202-residue stretch at 197-398 (WTPSNIADVL…LGLPEEIVAR (202 aa)) folds into the GMPS ATP-PPase domain. 224–230 (SGGVDSA) lines the ATP pocket.

In terms of assembly, homodimer.

It carries out the reaction XMP + L-glutamine + ATP + H2O = GMP + L-glutamate + AMP + diphosphate + 2 H(+). The protein operates within purine metabolism; GMP biosynthesis; GMP from XMP (L-Gln route): step 1/1. Its function is as follows. Catalyzes the synthesis of GMP from XMP. This chain is GMP synthase [glutamine-hydrolyzing], found in Nocardia farcinica (strain IFM 10152).